A 316-amino-acid chain; its full sequence is Probable cobalamin biosynthesis protein CobD (316 aa).

Transmembrane regions (helical) follow at residues 1–21 (MITEIFPFSVLILALLIDIVL), 50–70 (ISGMIISVLVISGAVLAGFAL), 89–109 (ILALIISSYLLKSTFAFKSLI), 165–185 (PLFYYVLFSCAGLGVEAALAF), and 294–314 (ISLIGRAMVLAALLSALLLIL).

Belongs to the CobD/CbiB family.

It localises to the cell membrane. It functions in the pathway cofactor biosynthesis; adenosylcobalamin biosynthesis. Converts cobyric acid to cobinamide by the addition of aminopropanol on the F carboxylic group. This is Probable cobalamin biosynthesis protein CobD from Methanothrix thermoacetophila (strain DSM 6194 / JCM 14653 / NBRC 101360 / PT) (Methanosaeta thermophila).